A 987-amino-acid polypeptide reads, in one-letter code: Ras guanine nucleotide exchange factor efc25 (987 aa).

Basic and acidic residues predominate over residues 1–10; the sequence is MRRPNLDRLR. 3 disordered regions span residues 1-50, 100-130, and 529-552; these read MRRP…STMS, FSSTHSLTRQPSPRSPLTPLKGNTRASPEIR, and NANTAKDDEPARQTNKGTTRISRS. Residues 19-39 are compositionally biased toward low complexity; sequence TSVSKPSTPSYSTYSLSPTFS. Polar residues-rich tracts occupy residues 40–50, 102–111, and 540–552; these read DKSVLSPSTMS, STHSLTRQPS, and RQTNKGTTRISRS. S552 carries the phosphoserine modification. An N-terminal Ras-GEF domain is found at 590 to 723; the sequence is SDNNVKGGTL…VILSEIDNLW (134 aa). Positions 752–985 constitute a Ras-GEF domain; that stretch reads TPEEFASQMT…FDKSLSLEPR (234 aa).

Its subcellular location is the cytoplasm. Its function is as follows. Has a role in chromosome segregation and cell morphology upstream of the ras1-scd1 pathway. Promotes the exchange of ras1-bound GDP by GTP leading to its activation. The polypeptide is Ras guanine nucleotide exchange factor efc25 (efc25) (Schizosaccharomyces pombe (strain 972 / ATCC 24843) (Fission yeast)).